A 602-amino-acid polypeptide reads, in one-letter code: Elongation factor 4 (602 aa).

The 183-residue stretch at 7–189 folds into the tr-type G domain; it reads RNIRNFSIIA…AIVQRIPAPQ (183 aa). GTP is bound by residues 19–24 and 136–139; these read DHGKST and NKID.

Belongs to the TRAFAC class translation factor GTPase superfamily. Classic translation factor GTPase family. LepA subfamily.

The protein resides in the cell inner membrane. The catalysed reaction is GTP + H2O = GDP + phosphate + H(+). Functionally, required for accurate and efficient protein synthesis under certain stress conditions. May act as a fidelity factor of the translation reaction, by catalyzing a one-codon backward translocation of tRNAs on improperly translocated ribosomes. Back-translocation proceeds from a post-translocation (POST) complex to a pre-translocation (PRE) complex, thus giving elongation factor G a second chance to translocate the tRNAs correctly. Binds to ribosomes in a GTP-dependent manner. This is Elongation factor 4 from Xylella fastidiosa (strain 9a5c).